The chain runs to 295 residues: Pyridoxal 5'-phosphate synthase subunit PdxS (295 aa).

D-ribose 5-phosphate is bound at residue aspartate 25. Lysine 82 serves as the catalytic Schiff-base intermediate with D-ribose 5-phosphate. Glycine 154 is a D-ribose 5-phosphate binding site. Arginine 166 is a D-glyceraldehyde 3-phosphate binding site. Residues glycine 215 and 236 to 237 (GS) each bind D-ribose 5-phosphate.

The protein belongs to the PdxS/SNZ family. In terms of assembly, in the presence of PdxT, forms a dodecamer of heterodimers.

The enzyme catalyses aldehydo-D-ribose 5-phosphate + D-glyceraldehyde 3-phosphate + L-glutamine = pyridoxal 5'-phosphate + L-glutamate + phosphate + 3 H2O + H(+). Its pathway is cofactor biosynthesis; pyridoxal 5'-phosphate biosynthesis. In terms of biological role, catalyzes the formation of pyridoxal 5'-phosphate from ribose 5-phosphate (RBP), glyceraldehyde 3-phosphate (G3P) and ammonia. The ammonia is provided by the PdxT subunit. Can also use ribulose 5-phosphate and dihydroxyacetone phosphate as substrates, resulting from enzyme-catalyzed isomerization of RBP and G3P, respectively. The polypeptide is Pyridoxal 5'-phosphate synthase subunit PdxS (Dictyoglomus turgidum (strain DSM 6724 / Z-1310)).